The sequence spans 211 residues: Uridine kinase (211 aa).

Gly12–Thr19 contributes to the ATP binding site.

The protein belongs to the uridine kinase family.

The protein resides in the cytoplasm. It carries out the reaction uridine + ATP = UMP + ADP + H(+). The catalysed reaction is cytidine + ATP = CMP + ADP + H(+). It participates in pyrimidine metabolism; CTP biosynthesis via salvage pathway; CTP from cytidine: step 1/3. It functions in the pathway pyrimidine metabolism; UMP biosynthesis via salvage pathway; UMP from uridine: step 1/1. The sequence is that of Uridine kinase from Anoxybacillus flavithermus (strain DSM 21510 / WK1).